Consider the following 231-residue polypeptide: Large ribosomal subunit protein uL1 (231 aa).

It belongs to the universal ribosomal protein uL1 family. Part of the 50S ribosomal subunit.

In terms of biological role, binds directly to 23S rRNA. The L1 stalk is quite mobile in the ribosome, and is involved in E site tRNA release. Functionally, protein L1 is also a translational repressor protein, it controls the translation of the L11 operon by binding to its mRNA. In Ruthia magnifica subsp. Calyptogena magnifica, this protein is Large ribosomal subunit protein uL1.